The chain runs to 490 residues: V-type proton ATPase subunit B (490 aa).

R380 is an ATP binding site.

The protein belongs to the ATPase alpha/beta chains family. V-ATPase is a heteromultimeric enzyme made up of two complexes: the ATP-hydrolytic V1 complex and the proton translocation V0 complex. The V1 complex consists of three catalytic AB heterodimers that form a heterohexamer, three peripheral stalks each consisting of EG heterodimers, one central rotor including subunits D and F, and the regulatory subunits C and H. The proton translocation complex V0 consists of the proton transport subunit a, a ring of proteolipid subunits c9c'', rotary subunit d, subunits e and f, and the accessory subunits VhaAC45 and ATP6AP2. In terms of tissue distribution, expressed in Malpighian tubules, rectum, antennal palps and oviduct.

Its function is as follows. Non-catalytic subunit of the V1 complex of vacuolar(H+)-ATPase (V-ATPase), a multisubunit enzyme composed of a peripheral complex (V1) that hydrolyzes ATP and a membrane integral complex (V0) that translocates protons. V-ATPase is responsible for acidifying and maintaining the pH of intracellular compartments and in some cell types, is targeted to the plasma membrane, where it is responsible for acidifying the extracellular environment. Essential for the proper assembly and activity of V-ATPase. In Drosophila melanogaster (Fruit fly), this protein is V-type proton ATPase subunit B (Vha55).